The sequence spans 419 residues: L-cysteine:1D-myo-inositol 2-amino-2-deoxy-alpha-D-glucopyranoside ligase (419 aa).

Residues 1–20 form a disordered region; that stretch reads MRSWSVPEVPALPGRGPRVH. C44 contributes to the Zn(2+) binding site. Residues 44–47, T59, and 82–84 contribute to the L-cysteinyl-5'-AMP site; these read CGIT and NVT. Positions 46–56 match the 'HIGH' region motif; that stretch reads ITPYDATHLGH. Residues 191-196 carry the 'ERGGDP' region motif; sequence ERGGDP. Residue W232 coordinates L-cysteinyl-5'-AMP. Position 236 (C236) interacts with Zn(2+). 254-256 lines the L-cysteinyl-5'-AMP pocket; the sequence is GSD. H261 provides a ligand contact to Zn(2+). An L-cysteinyl-5'-AMP-binding site is contributed by V289. The short motif at 295–299 is the 'KMSKS' region element; that stretch reads KMSKS.

This sequence belongs to the class-I aminoacyl-tRNA synthetase family. MshC subfamily. As to quaternary structure, monomer. Requires Zn(2+) as cofactor.

The enzyme catalyses 1D-myo-inositol 2-amino-2-deoxy-alpha-D-glucopyranoside + L-cysteine + ATP = 1D-myo-inositol 2-(L-cysteinylamino)-2-deoxy-alpha-D-glucopyranoside + AMP + diphosphate + H(+). In terms of biological role, catalyzes the ATP-dependent condensation of GlcN-Ins and L-cysteine to form L-Cys-GlcN-Ins. The polypeptide is L-cysteine:1D-myo-inositol 2-amino-2-deoxy-alpha-D-glucopyranoside ligase (Kineococcus radiotolerans (strain ATCC BAA-149 / DSM 14245 / SRS30216)).